A 191-amino-acid polypeptide reads, in one-letter code: Peptidyl-tRNA hydrolase (191 aa).

Position 17 (Tyr17) interacts with tRNA. His22 acts as the Proton acceptor in catalysis. 3 residues coordinate tRNA: Tyr68, Asn70, and Asn116.

The protein belongs to the PTH family. In terms of assembly, monomer.

Its subcellular location is the cytoplasm. It catalyses the reaction an N-acyl-L-alpha-aminoacyl-tRNA + H2O = an N-acyl-L-amino acid + a tRNA + H(+). Its function is as follows. Hydrolyzes ribosome-free peptidyl-tRNAs (with 1 or more amino acids incorporated), which drop off the ribosome during protein synthesis, or as a result of ribosome stalling. Functionally, catalyzes the release of premature peptidyl moieties from peptidyl-tRNA molecules trapped in stalled 50S ribosomal subunits, and thus maintains levels of free tRNAs and 50S ribosomes. This is Peptidyl-tRNA hydrolase from Francisella tularensis subsp. mediasiatica (strain FSC147).